We begin with the raw amino-acid sequence, 233 residues long: Tapetum-specific methyltransferase 1 (233 aa).

Lysine 8 contacts substrate. Residues valine 52, glutamate 74, 76-77, serine 82, aspartate 100, and alanine 129 contribute to the S-adenosyl-L-methionine site; that span reads GV. Residue aspartate 150 coordinates substrate. Residue aspartate 150 coordinates a divalent metal cation. Position 152 (aspartate 152) interacts with S-adenosyl-L-methionine. 2 residues coordinate a divalent metal cation: aspartate 176 and asparagine 177.

Belongs to the class I-like SAM-binding methyltransferase superfamily. Cation-dependent O-methyltransferase family. CCoAMT subfamily. A divalent metal cation serves as cofactor. As to expression, expressed in inflorescences and flower buds. Not detected in roots, leaves or stems. Located exclusively in the tapetum of developing stamen.

Its pathway is aromatic compound metabolism; phenylpropanoid biosynthesis. Methyltransferase involved in phenylpropanoid polyamine conjugate biosynthesis. In vivo, methylates only one of the 5-hydroxyferuloyl moieties of N1,N5,N10-tri-(hydroxyferuloyl)-spermidine, while is able in vitro to convert all three 5-hydroxyferuloyl residues to the corresponding sinapoyl moieties and to methylate caffeoyl CoA and tricaffeoyl spermidine. This is Tapetum-specific methyltransferase 1 (TSM1) from Arabidopsis thaliana (Mouse-ear cress).